A 149-amino-acid chain; its full sequence is Transcriptional repressor NrdR (149 aa).

A zinc finger spans residues 3–34 (CPFCGTQDTKVIDSRLVADGASVRRRRECNHC). Residues 49 to 139 (PRVIKTDGSR…VYRSFEDIRE (91 aa)) enclose the ATP-cone domain.

This sequence belongs to the NrdR family. Zn(2+) is required as a cofactor.

Its function is as follows. Negatively regulates transcription of bacterial ribonucleotide reductase nrd genes and operons by binding to NrdR-boxes. In Idiomarina loihiensis (strain ATCC BAA-735 / DSM 15497 / L2-TR), this protein is Transcriptional repressor NrdR.